The sequence spans 39 residues: AGSMDSCSETGVCMKACSERIRQVENDNKCPAGECICTT.

Disulfide bonds link cysteine 7/cysteine 30, cysteine 13/cysteine 35, and cysteine 17/cysteine 37.

It belongs to the short scorpion toxin superfamily. Potassium channel inhibitor family. Alpha-KTx 31 subfamily. In terms of tissue distribution, expressed by the venom gland.

Its subcellular location is the secreted. Voltage-gated potassium channel inhibitor. 1 uM of the native toxin inhibits rat Kv1.2/KCNA2 (100% inhibition), and drosophila Shaker IR/Sh (100%), human Kv1.3/KCNA3 (83%), rat Kv1.1/KCNA1 (32%) and rat Kv1.6/KCNA6 (21%). In Buthus occitanus tunetanus (Common European scorpion), this protein is Potassium channel toxin alpha-KTx 31.1.